Here is a 96-residue protein sequence, read N- to C-terminus: Large ribosomal subunit protein bL27 (96 aa).

The interval histidine 12–alanine 33 is disordered. Residues alanine 19–arginine 28 show a composition bias toward low complexity.

The protein belongs to the bacterial ribosomal protein bL27 family.

The protein is Large ribosomal subunit protein bL27 of Lactobacillus helveticus (strain DPC 4571).